The following is a 440-amino-acid chain: Chromosome partition protein MukF (440 aa).

Residues 208–236 (LSETSGTLRELQDTLEAAGDKLQANLLRI) are leucine-zipper.

Belongs to the MukF family. In terms of assembly, interacts, and probably forms a ternary complex, with MukE and MukB via its C-terminal region. The complex formation is stimulated by calcium or magnesium. It is required for an interaction between MukE and MukB.

Its subcellular location is the cytoplasm. It localises to the nucleoid. Its function is as follows. Involved in chromosome condensation, segregation and cell cycle progression. May participate in facilitating chromosome segregation by condensation DNA from both sides of a centrally located replisome during cell division. Not required for mini-F plasmid partitioning. Probably acts via its interaction with MukB and MukE. Overexpression results in anucleate cells. It has a calcium binding activity. This chain is Chromosome partition protein MukF, found in Escherichia coli (strain UTI89 / UPEC).